The chain runs to 179 residues: Putative 5'(3')-deoxyribonucleotidase (179 aa).

D9 (nucleophile) is an active-site residue. Mg(2+)-binding residues include D9, D11, and D135. The active-site Proton donor is the D11.

This sequence belongs to the 5'(3')-deoxyribonucleotidase family. Mg(2+) is required as a cofactor.

Functionally, dephosphorylates the 5' and 2'(3')-phosphates of deoxyribonucleotides. This chain is Putative 5'(3')-deoxyribonucleotidase, found in Staphylococcus epidermidis (strain ATCC 12228 / FDA PCI 1200).